The primary structure comprises 450 residues: Envelope glycoprotein M (450 aa).

At 1–31 (MARRGAAVAEEPLLPSSGIVGIGPIEGINWR) the chain is on the intravirion side. The chain crosses the membrane as a helical span at residues 32 to 52 (TWLVQVFCFALTTSVLFITLV). The Virion surface portion of the chain corresponds to 53-101 (TASLPQTGYPCFYGSLVDYTQKNHSVVDGVWMRQIAGGVAPTLFLETTS). The chain crosses the membrane as a helical span at residues 102–122 (LVAFLYYTTLVLVAISFYLII). Topologically, residues 123-153 (SAVLVRRYARGKECTAVAGCTRPTTTLIASH) are intravirion. The helical transmembrane segment at 154–174 (VTLVLGTLATWLLQVVILLLS) threads the bilayer. The Virion surface portion of the chain corresponds to 175–178 (HKQA). The helical transmembrane segment at 179–199 (VLGAAVYVVHFVSLVFFCMSF) threads the bilayer. At 200 to 236 (SGLGTASAQYSSNLRILKTNLPALHKMAGPGRAVMTN) the chain is on the intravirion side. Residues 237–257 (LGMGMLGISLPILSLMLGIIL) form a helical membrane-spanning segment. Residues 258-270 (ANSFHITLWQTVT) are Virion surface-facing. Residues 271–291 (VAVGVFVALGLMFLIIVELIV) traverse the membrane as a helical segment. At 292 to 294 (SHY) the chain is on the intravirion side. A helical membrane pass occupies residues 295 to 315 (VHVLVGPALAVLVASSTLAVA). Residues 316-334 (THSYFVHFHAMVSVQAPNL) lie on the Virion surface side of the membrane. A helical transmembrane segment spans residues 335–355 (ATASKAIVGIMAVISIIMLVV). Residues 356–450 (RLVRAIMFHK…PERSHRREYR (95 aa)) are Intravirion-facing.

It belongs to the herpesviridae glycoprotein M family. As to quaternary structure, interacts (via N-terminus) with gN (via N-terminus). The gM-gN heterodimer forms the gCII complex.

The protein resides in the virion membrane. The protein localises to the host Golgi apparatus. It localises to the host trans-Golgi network. It is found in the host endosome membrane. Its subcellular location is the host nucleus inner membrane. In terms of biological role, envelope glycoprotein important for virion assembly and egress. Plays a role in the correct incorporation of gH-gL into virion membrane. Directs the glycoprotein N (gN) to the host trans-Golgi network. The chain is Envelope glycoprotein M from Equus caballus (Horse).